The primary structure comprises 132 residues: Phycocyanin PC645 alpha-1 subunit (132 aa).

Positions 54 and 68 each coordinate (2R,3E)-phycocyanobilin. Positions 70, 76, 77, and 92 each coordinate mesobiliverdin. Residues Pro123 and Ile125 each contribute to the 15,16-dihydrobiliverdin site.

It belongs to the phycoerythrin family. As to quaternary structure, heterotetramer of 2 different alpha chains and 2 identical beta chains which form 2 alpha-beta heterodimers within the heterotetramer. Contains two phycocyanobilin chromophores, one mesobiliverdin chromophore and one 15,16-dihydrobiliverdin chromophore with binding mediated by both the alpha and beta subunits.

It is found in the plastid. The protein localises to the chloroplast thylakoid membrane. In terms of biological role, light-harvesting photosynthetic tetrapyrrole chromophore-protein from the phycobiliprotein complex. The chain is Phycocyanin PC645 alpha-1 subunit from Chroomonas sp. (strain CCMP270).